The primary structure comprises 361 residues: Peptide chain release factor 1 (361 aa).

Residue Gln236 is modified to N5-methylglutamine. Residues 285–309 show a composition bias toward basic and acidic residues; sequence TAKDSARAADRKAQVGSGDRSERIR. The segment at 285–311 is disordered; the sequence is TAKDSARAADRKAQVGSGDRSERIRTY.

This sequence belongs to the prokaryotic/mitochondrial release factor family. In terms of processing, methylated by PrmC. Methylation increases the termination efficiency of RF1.

The protein localises to the cytoplasm. Functionally, peptide chain release factor 1 directs the termination of translation in response to the peptide chain termination codons UAG and UAA. This Methylorubrum extorquens (strain CM4 / NCIMB 13688) (Methylobacterium extorquens) protein is Peptide chain release factor 1.